The sequence spans 669 residues: DNA ligase (669 aa).

NAD(+)-binding positions include 34–38 (DAEYD), 83–84 (SL), and E114. K116 functions as the N6-AMP-lysine intermediate in the catalytic mechanism. The NAD(+) site is built by R137, E171, K287, and K311. Zn(2+) is bound by residues C405, C408, C423, and C428. Positions 591-669 (NVESYFAGKT…EERFLQELNK (79 aa)) constitute a BRCT domain.

This sequence belongs to the NAD-dependent DNA ligase family. LigA subfamily. It depends on Mg(2+) as a cofactor. Mn(2+) serves as cofactor.

The catalysed reaction is NAD(+) + (deoxyribonucleotide)n-3'-hydroxyl + 5'-phospho-(deoxyribonucleotide)m = (deoxyribonucleotide)n+m + AMP + beta-nicotinamide D-nucleotide.. In terms of biological role, DNA ligase that catalyzes the formation of phosphodiester linkages between 5'-phosphoryl and 3'-hydroxyl groups in double-stranded DNA using NAD as a coenzyme and as the energy source for the reaction. It is essential for DNA replication and repair of damaged DNA. This Bacillus mycoides (strain KBAB4) (Bacillus weihenstephanensis) protein is DNA ligase.